Consider the following 120-residue polypeptide: Ribonuclease P protein component 2 (120 aa).

Belongs to the eukaryotic/archaeal RNase P protein component 2 family. In terms of assembly, consists of a catalytic RNA component and at least 4-5 protein subunits.

The protein localises to the cytoplasm. The enzyme catalyses Endonucleolytic cleavage of RNA, removing 5'-extranucleotides from tRNA precursor.. In terms of biological role, part of ribonuclease P, a protein complex that generates mature tRNA molecules by cleaving their 5'-ends. This Thermococcus gammatolerans (strain DSM 15229 / JCM 11827 / EJ3) protein is Ribonuclease P protein component 2.